Here is a 45-residue protein sequence, read N- to C-terminus: MTKRTLGGTVRKQKRTSGFRARMRSHTGQNVIRARRKKGRHRLTV.

Residues methionine 1 to valine 45 form a disordered region. Composition is skewed to basic residues over residues arginine 11–serine 25 and arginine 33–valine 45.

Belongs to the bacterial ribosomal protein bL34 family.

In Picosynechococcus sp. (strain ATCC 27264 / PCC 7002 / PR-6) (Agmenellum quadruplicatum), this protein is Large ribosomal subunit protein bL34.